The chain runs to 724 residues: Cyclin-T1 (724 aa).

S117 bears the Phosphoserine mark. The Nuclear localization signal signature appears at 253–270 (KRIRNWRAYQAAMKTKPD). K342 participates in a covalent cross-link: Glycyl lysine isopeptide (Lys-Gly) (interchain with G-Cter in SUMO2). Residues 384-425 (SAKVSLKEYRAKHAEELAAQKRQLENMEANVKSQYAYAAQNL) are a coiled coil. S388 bears the Phosphoserine mark. The residue at position 390 (K390) is an N6-acetyllysine. K415 is covalently cross-linked (Glycyl lysine isopeptide (Lys-Gly) (interchain with G-Cter in SUMO2)). ADP-ribosylserine occurs at positions 416, 473, and 474. Positions 479-549 (IKMRIKVHSA…RPSDPKHSSQ (71 aa)) are histidine-rich domain (HRD). Residue K480 forms a Glycyl lysine isopeptide (Lys-Gly) (interchain with G-Cter in SUMO2) linkage. Residues 483 to 507 (IKVHSAGDKHNSIEDSVTKSREHKE) show a composition bias toward basic and acidic residues. 2 disordered regions span residues 483 to 586 (IKVH…VFDH) and 691 to 724 (PRAG…PLPK). K484 bears the N6-(ADP-ribosyl)lysine mark. The residue at position 486 (H486) is an ADP-ribosylhistidine. S494 and S498 each carry phosphoserine. A compositionally biased stretch (basic residues) spans 508–529 (KQRTHPSNHHHHHNHHSHRHSH). The residue at position 529 (H529) is an ADP-ribosylhistidine. S548 and S551 each carry ADP-ribosylserine. ADP-ribosylhistidine is present on H555. A compositionally biased stretch (low complexity) spans 559-569 (SLSSTLSSSSS). At S562 the chain carries ADP-ribosylserine. A compositionally biased stretch (pro residues) spans 708-724 (PPPLPSEPPPPLPPLPK).

It belongs to the cyclin family. Cyclin C subfamily. In terms of assembly, cyclin-T1 is the predominant cyclin that associates with CDK9 to form a heterodimer called P-TEFb. P-TEFb forms a complex with AFF4/AF5Q31. Component of a complex which is at least composed of HTATSF1/Tat-SF1, P-TEFb complex, RNA pol II, SUPT5H, and NCL/nucleolin. Component of the 7SK snRNP complex at least composed of P-TEFb (composed of CDK9 and CCNT1/cyclin-T1), HEXIM1, HEXIM2, BCDIN3, SART3 proteins and 7SK and U6 snRNAs. Interacts (via central region) with ZMYND8 (via N-terminus); the interaction is direct and the association appears to occur between homodimeric ZMYND8 and the activated form of the P-TEFb complex. Interacts with BRD4, targets chromatin binding. Interacts with JMJD6. Interacts with MDFIC. Interacts with HSF1. Interacts with HTATSF1. Interacts with TBX21. ADP-ribosylation on serine residues by PARP1 in response to DNA damage disrupts the phase separation activity of CCNT1, thereby preventing activation of CDK9.

It localises to the nucleus. In terms of biological role, regulatory subunit of the cyclin-dependent kinase pair (CDK9/cyclin-T1) complex, also called positive transcription elongation factor B (P-TEFb), which facilitates the transition from abortive to productive elongation by phosphorylating the CTD (C-terminal domain) of the large subunit of RNA polymerase II (RNA Pol II). Required to activate the protein kinase activity of CDK9: acts by mediating formation of liquid-liquid phase separation (LLPS) that enhances binding of P-TEFb to the CTD of RNA Pol II. The chain is Cyclin-T1 (Ccnt1) from Mus musculus (Mouse).